Reading from the N-terminus, the 490-residue chain is Cytochrome P450 2C12, female-specific (490 aa).

Cys435 lines the heme pocket.

The protein belongs to the cytochrome P450 family. The cofactor is heme.

Its subcellular location is the endoplasmic reticulum membrane. It localises to the microsome membrane. It carries out the reaction an organic molecule + reduced [NADPH--hemoprotein reductase] + O2 = an alcohol + oxidized [NADPH--hemoprotein reductase] + H2O + H(+). This P450 is active in 15-beta-hydroxylation of steroid sulfates. This chain is Cytochrome P450 2C12, female-specific (Cyp2c12), found in Rattus norvegicus (Rat).